A 600-amino-acid polypeptide reads, in one-letter code: Proline--tRNA ligase (600 aa).

It belongs to the class-II aminoacyl-tRNA synthetase family. ProS type 1 subfamily. Homodimer.

The protein resides in the cytoplasm. It catalyses the reaction tRNA(Pro) + L-proline + ATP = L-prolyl-tRNA(Pro) + AMP + diphosphate. Its function is as follows. Catalyzes the attachment of proline to tRNA(Pro) in a two-step reaction: proline is first activated by ATP to form Pro-AMP and then transferred to the acceptor end of tRNA(Pro). As ProRS can inadvertently accommodate and process non-cognate amino acids such as alanine and cysteine, to avoid such errors it has two additional distinct editing activities against alanine. One activity is designated as 'pretransfer' editing and involves the tRNA(Pro)-independent hydrolysis of activated Ala-AMP. The other activity is designated 'posttransfer' editing and involves deacylation of mischarged Ala-tRNA(Pro). The misacylated Cys-tRNA(Pro) is not edited by ProRS. This is Proline--tRNA ligase from Prochlorococcus marinus (strain MIT 9215).